A 700-amino-acid chain; its full sequence is Glycine--tRNA ligase beta subunit (700 aa).

It belongs to the class-II aminoacyl-tRNA synthetase family. In terms of assembly, tetramer of two alpha and two beta subunits.

It is found in the cytoplasm. The catalysed reaction is tRNA(Gly) + glycine + ATP = glycyl-tRNA(Gly) + AMP + diphosphate. This is Glycine--tRNA ligase beta subunit from Helicobacter pylori (strain Shi470).